Reading from the N-terminus, the 227-residue chain is MITNAISKIIKYDFKNTQLLNEALTHPSVLSKDNNNFNYERLEFLGDAVLNLVISEMLFNIFPYDTEGNLAKKKTALVCGTKLVEIAQSINLGIFIIMSDGERSCGGANNSNNLENALEALIGAIYLDGGLKAAKDFIFLFWKNSATHMKVPPQDAKTILQEWAQSKGFPAPSYHIINKSGPDHNPCFTVEVRINSHETLHATGHNKKLAEQKAASLMLAKINYKIK.

One can recognise an RNase III domain in the interval 3 to 130 (TNAISKIIKY…LIGAIYLDGG (128 aa)). Mg(2+) is bound at residue Glu-43. The active site involves Asp-47. Residues Asn-116 and Glu-119 each coordinate Mg(2+). Residue Glu-119 is part of the active site. In terms of domain architecture, DRBM spans 155–224 (DAKTILQEWA…ASLMLAKINY (70 aa)).

Belongs to the ribonuclease III family. As to quaternary structure, homodimer. The cofactor is Mg(2+).

It is found in the cytoplasm. The catalysed reaction is Endonucleolytic cleavage to 5'-phosphomonoester.. Digests double-stranded RNA. Involved in the processing of primary rRNA transcript to yield the immediate precursors to the large and small rRNAs (23S and 16S). Processes some mRNAs, and tRNAs when they are encoded in the rRNA operon. Processes pre-crRNA and tracrRNA of type II CRISPR loci if present in the organism. The protein is Ribonuclease 3 of Ehrlichia ruminantium (strain Welgevonden).